The chain runs to 344 residues: Photosystem II protein D1 (344 aa).

Thr2 is modified (N-acetylthreonine). Phosphothreonine is present on Thr2. A run of 3 helical transmembrane segments spans residues 29–46, 118–133, and 142–156; these read YIGW…TATS, HFFL…EWEL, and WIAV…AATA. His118 contacts chlorophyll a. Tyr126 provides a ligand contact to pheophytin a. [CaMn4O5] cluster-binding residues include Asp170 and Glu189. Residues 197–218 form a helical membrane-spanning segment; sequence FHMLGVAGVFGGSLFSAMHGSL. Chlorophyll a is bound at residue His198. Residues His215 and 264–265 contribute to the a quinone site; that span reads SF. Position 215 (His215) interacts with Fe cation. Residue His272 participates in Fe cation binding. The helical transmembrane segment at 274 to 288 threads the bilayer; the sequence is FLAAWPVIGIWFTAL. The [CaMn4O5] cluster site is built by His332, Glu333, Asp342, and Ala344.

The protein belongs to the reaction center PufL/M/PsbA/D family. PSII is composed of 1 copy each of membrane proteins PsbA, PsbB, PsbC, PsbD, PsbE, PsbF, PsbH, PsbI, PsbJ, PsbK, PsbL, PsbM, PsbT, PsbX, PsbY, PsbZ, Psb30/Ycf12, at least 3 peripheral proteins of the oxygen-evolving complex and a large number of cofactors. It forms dimeric complexes. Requires The D1/D2 heterodimer binds P680, chlorophylls that are the primary electron donor of PSII, and subsequent electron acceptors. It shares a non-heme iron and each subunit binds pheophytin, quinone, additional chlorophylls, carotenoids and lipids. D1 provides most of the ligands for the Mn4-Ca-O5 cluster of the oxygen-evolving complex (OEC). There is also a Cl(-1) ion associated with D1 and D2, which is required for oxygen evolution. The PSII complex binds additional chlorophylls, carotenoids and specific lipids. as cofactor. Post-translationally, tyr-161 forms a radical intermediate that is referred to as redox-active TyrZ, YZ or Y-Z.

The protein resides in the plastid. It is found in the chloroplast thylakoid membrane. The catalysed reaction is 2 a plastoquinone + 4 hnu + 2 H2O = 2 a plastoquinol + O2. Its function is as follows. Photosystem II (PSII) is a light-driven water:plastoquinone oxidoreductase that uses light energy to abstract electrons from H(2)O, generating O(2) and a proton gradient subsequently used for ATP formation. It consists of a core antenna complex that captures photons, and an electron transfer chain that converts photonic excitation into a charge separation. The D1/D2 (PsbA/PsbD) reaction center heterodimer binds P680, the primary electron donor of PSII as well as several subsequent electron acceptors. The sequence is that of Photosystem II protein D1 from Pleurastrum terricola (Filamentous green alga).